An 89-amino-acid polypeptide reads, in one-letter code: Small ribosomal subunit protein uS15 (89 aa).

This sequence belongs to the universal ribosomal protein uS15 family. Part of the 30S ribosomal subunit. Forms a bridge to the 50S subunit in the 70S ribosome, contacting the 23S rRNA.

Its function is as follows. One of the primary rRNA binding proteins, it binds directly to 16S rRNA where it helps nucleate assembly of the platform of the 30S subunit by binding and bridging several RNA helices of the 16S rRNA. In terms of biological role, forms an intersubunit bridge (bridge B4) with the 23S rRNA of the 50S subunit in the ribosome. In Rhizobium leguminosarum bv. trifolii (strain WSM2304), this protein is Small ribosomal subunit protein uS15.